The following is a 388-amino-acid chain: Succinate--CoA ligase [ADP-forming] subunit beta (388 aa).

In terms of domain architecture, ATP-grasp spans 9-244; the sequence is KQLFARYGLP…QSQEDPREAQ (236 aa). ATP is bound by residues Lys-46, 53–55, Glu-99, Thr-102, and Glu-107; that span reads GRG. Mg(2+) is bound by residues Asn-199 and Asp-213. Substrate is bound by residues Asn-264 and 321–323; that span reads GIV.

Belongs to the succinate/malate CoA ligase beta subunit family. As to quaternary structure, heterotetramer of two alpha and two beta subunits. It depends on Mg(2+) as a cofactor.

The enzyme catalyses succinate + ATP + CoA = succinyl-CoA + ADP + phosphate. The catalysed reaction is GTP + succinate + CoA = succinyl-CoA + GDP + phosphate. It participates in carbohydrate metabolism; tricarboxylic acid cycle; succinate from succinyl-CoA (ligase route): step 1/1. Succinyl-CoA synthetase functions in the citric acid cycle (TCA), coupling the hydrolysis of succinyl-CoA to the synthesis of either ATP or GTP and thus represents the only step of substrate-level phosphorylation in the TCA. The beta subunit provides nucleotide specificity of the enzyme and binds the substrate succinate, while the binding sites for coenzyme A and phosphate are found in the alpha subunit. The polypeptide is Succinate--CoA ligase [ADP-forming] subunit beta (Salmonella arizonae (strain ATCC BAA-731 / CDC346-86 / RSK2980)).